The sequence spans 326 residues: Malate dehydrogenase (326 aa).

Gly-11–Gly-17 contributes to the NAD(+) binding site. Residues Arg-92 and Arg-98 each coordinate substrate. NAD(+) is bound by residues Asn-105, Gln-112, and Val-129–Asn-131. 2 residues coordinate substrate: Asn-131 and Arg-162. The active-site Proton acceptor is His-187.

Belongs to the LDH/MDH superfamily. MDH type 2 family.

It catalyses the reaction (S)-malate + NAD(+) = oxaloacetate + NADH + H(+). In terms of biological role, catalyzes the reversible oxidation of malate to oxaloacetate. This chain is Malate dehydrogenase, found in Chromobacterium violaceum (strain ATCC 12472 / DSM 30191 / JCM 1249 / CCUG 213 / NBRC 12614 / NCIMB 9131 / NCTC 9757 / MK).